The chain runs to 358 residues: Protein-arginine kinase (358 aa).

A Phosphagen kinase C-terminal domain is found at 24-255 (IVLSSRIRLA…KQLIRQERVA (232 aa)). Residues 27–31 (SSRIR), His92, Arg126, 177–181 (RASVM), and 208–213 (RGIYGE) contribute to the ATP site. An RDXXRA motif of the pArg binding pocket involved in allosteric regulation motif is present at residues 338 to 343 (RDERRA).

Belongs to the ATP:guanido phosphotransferase family.

It carries out the reaction L-arginyl-[protein] + ATP = N(omega)-phospho-L-arginyl-[protein] + ADP + H(+). Appears to be allosterically activated by the binding of pArg-containing polypeptides to the pArg-binding pocket localized in the C-terminal domain of McsB. Functionally, catalyzes the specific phosphorylation of arginine residues in a large number of proteins. Is part of the bacterial stress response system. Protein arginine phosphorylation has a physiologically important role and is involved in the regulation of many critical cellular processes, such as protein homeostasis, motility, competence, and stringent and stress responses, by regulating gene expression and protein activity. In Shouchella clausii (strain KSM-K16) (Alkalihalobacillus clausii), this protein is Protein-arginine kinase.